A 642-amino-acid chain; its full sequence is Probable glutamate--tRNA ligase, cytoplasmic (642 aa).

Residue 152–154 participates in L-glutamate binding; it reads RFP. The short motif at 157–166 is the 'HIGH' region element; the sequence is PNGRLHIGHA. Histidine 162 serves as a coordination point for ATP. Residues aspartate 188, 326-330, and arginine 344 contribute to the L-glutamate site; that span reads YDFAC. ATP is bound by residues glutamate 347 and 382-386; that span reads VLSKR. The short motif at 382 to 386 is the 'KMSKS' region element; it reads VLSKR.

Belongs to the class-I aminoacyl-tRNA synthetase family. Glutamate--tRNA ligase type 2 subfamily.

It localises to the cytoplasm. It catalyses the reaction tRNA(Glu) + L-glutamate + ATP = L-glutamyl-tRNA(Glu) + AMP + diphosphate. In Encephalitozoon cuniculi (strain GB-M1) (Microsporidian parasite), this protein is Probable glutamate--tRNA ligase, cytoplasmic.